The following is a 702-amino-acid chain: Polyribonucleotide nucleotidyltransferase 3 (702 aa).

Mg(2+)-binding residues include aspartate 483 and aspartate 489. One can recognise a KH domain in the interval 550–609 (PKVTQIKVHPDKVREVIGAGGKVINKIIDETGCKITIENDGTIYVAAPDQESSRRAVEMI). Residues 619–687 (GEVYTGKVIK…PQGKIGLSRK (69 aa)) enclose the S1 motif domain.

The protein belongs to the polyribonucleotide nucleotidyltransferase family. Requires Mg(2+) as cofactor.

It localises to the cytoplasm. The enzyme catalyses RNA(n+1) + phosphate = RNA(n) + a ribonucleoside 5'-diphosphate. Its function is as follows. Involved in mRNA degradation. Catalyzes the phosphorolysis of single-stranded polyribonucleotides processively in the 3'- to 5'-direction. The protein is Polyribonucleotide nucleotidyltransferase 3 of Alkaliphilus metalliredigens (strain QYMF).